Here is a 134-residue protein sequence, read N- to C-terminus: Profilin-4 (134 aa).

This sequence belongs to the profilin family. Occurs in many kinds of cells as a complex with monomeric actin in a 1:1 ratio. As to expression, specifically expressed in mature and germinating pollen grains, and growing pollen tubes (at protein level).

Its subcellular location is the cytoplasm. It is found in the cytoskeleton. Its function is as follows. Binds to actin monomers and regulates the organization of the actin cytoskeleton. At high concentrations, profilin prevents the polymerization of actin, whereas it enhances it at low concentrations. At low concentrations, associates with the poly-proline motif of formins to enhance actin filament elongation rate. Acts redundantly with PRF5 to regulate apical actin polymerization at the tip of pollen tube and control polarized pollen tube growth. Functions probably by favoring formin-mediated actin polymerization at pollen tube tips. The polypeptide is Profilin-4 (Arabidopsis thaliana (Mouse-ear cress)).